We begin with the raw amino-acid sequence, 234 residues long: Small ribosomal subunit protein uS10m (234 aa).

A mitochondrion-targeting transit peptide spans 1 to 23 (MLRIGYRGFSTRSRVFKLSPQEY).

This sequence belongs to the universal ribosomal protein uS10 family. In terms of assembly, component of the mitochondrial small ribosomal subunit (mt-SSU).

It is found in the mitochondrion. Functionally, component of the mitochondrial ribosome (mitoribosome), a dedicated translation machinery responsible for the synthesis of mitochondrial genome-encoded proteins, including at least some of the essential transmembrane subunits of the mitochondrial respiratory chain. The mitoribosomes are attached to the mitochondrial inner membrane and translation products are cotranslationally integrated into the membrane. This chain is Small ribosomal subunit protein uS10m (RSM10), found in Candida albicans (strain SC5314 / ATCC MYA-2876) (Yeast).